A 457-amino-acid polypeptide reads, in one-letter code: Siroheme synthase (457 aa).

A precorrin-2 dehydrogenase /sirohydrochlorin ferrochelatase region spans residues 1 to 204 (MDHLPIFCQL…ADEKAVNATT (204 aa)). NAD(+)-binding positions include 22-23 (DV) and 43-44 (LT). Position 128 is a phosphoserine (serine 128). The segment at 216–457 (GEVVLVGAGP…RDKLNWFSNH (242 aa)) is uroporphyrinogen-III C-methyltransferase. Proline 225 contributes to the S-adenosyl-L-methionine binding site. Aspartate 248 (proton acceptor) is an active-site residue. Residue lysine 270 is the Proton donor of the active site. Residues 301 to 303 (GGD), isoleucine 306, 331 to 332 (TA), methionine 382, and glycine 411 each bind S-adenosyl-L-methionine.

The protein in the N-terminal section; belongs to the precorrin-2 dehydrogenase / sirohydrochlorin ferrochelatase family. This sequence in the C-terminal section; belongs to the precorrin methyltransferase family.

It catalyses the reaction uroporphyrinogen III + 2 S-adenosyl-L-methionine = precorrin-2 + 2 S-adenosyl-L-homocysteine + H(+). The catalysed reaction is precorrin-2 + NAD(+) = sirohydrochlorin + NADH + 2 H(+). It carries out the reaction siroheme + 2 H(+) = sirohydrochlorin + Fe(2+). The protein operates within cofactor biosynthesis; adenosylcobalamin biosynthesis; precorrin-2 from uroporphyrinogen III: step 1/1. Its pathway is cofactor biosynthesis; adenosylcobalamin biosynthesis; sirohydrochlorin from precorrin-2: step 1/1. It participates in porphyrin-containing compound metabolism; siroheme biosynthesis; precorrin-2 from uroporphyrinogen III: step 1/1. It functions in the pathway porphyrin-containing compound metabolism; siroheme biosynthesis; siroheme from sirohydrochlorin: step 1/1. The protein operates within porphyrin-containing compound metabolism; siroheme biosynthesis; sirohydrochlorin from precorrin-2: step 1/1. In terms of biological role, multifunctional enzyme that catalyzes the SAM-dependent methylations of uroporphyrinogen III at position C-2 and C-7 to form precorrin-2 via precorrin-1. Then it catalyzes the NAD-dependent ring dehydrogenation of precorrin-2 to yield sirohydrochlorin. Finally, it catalyzes the ferrochelation of sirohydrochlorin to yield siroheme. The protein is Siroheme synthase of Salmonella typhi.